The following is a 108-amino-acid chain: UPF0102 protein Shewmr4_3685 (108 aa).

It belongs to the UPF0102 family.

In Shewanella sp. (strain MR-4), this protein is UPF0102 protein Shewmr4_3685.